Consider the following 103-residue polypeptide: Large ribosomal subunit protein bL21 (103 aa).

Belongs to the bacterial ribosomal protein bL21 family. As to quaternary structure, part of the 50S ribosomal subunit. Contacts protein L20.

Its function is as follows. This protein binds to 23S rRNA in the presence of protein L20. The chain is Large ribosomal subunit protein bL21 from Lactobacillus acidophilus (strain ATCC 700396 / NCK56 / N2 / NCFM).